The chain runs to 159 residues: Dihydrofolate reductase (159 aa).

Positions 2 to 157 (TLSILVAHDL…IPHTFLHLIR (156 aa)) constitute a DHFR domain. 6 to 8 (LVA) provides a ligand contact to substrate. NADP(+) is bound by residues 7–8 (VA) and 15–20 (IGFENQ). Residue Asp-28 participates in substrate binding. NADP(+) is bound at residue 44–47 (GRKT). Arg-58 provides a ligand contact to substrate. NADP(+)-binding positions include 63-66 (LTSD) and 93-98 (FGGQIL). Substrate is bound at residue Thr-112.

This sequence belongs to the dihydrofolate reductase family.

It catalyses the reaction (6S)-5,6,7,8-tetrahydrofolate + NADP(+) = 7,8-dihydrofolate + NADPH + H(+). It functions in the pathway cofactor biosynthesis; tetrahydrofolate biosynthesis; 5,6,7,8-tetrahydrofolate from 7,8-dihydrofolate: step 1/1. In terms of biological role, key enzyme in folate metabolism. Catalyzes an essential reaction for de novo glycine and purine synthesis, and for DNA precursor synthesis. This chain is Dihydrofolate reductase (folA), found in Staphylococcus aureus (strain MW2).